A 517-amino-acid chain; its full sequence is Ubiquitin carboxyl-terminal hydrolase 30 (517 aa).

Residues 1–35 (MLSSRAQAARTAADKALQRFLRTGAAVRYKVMKNW) are Mitochondrial intermembrane-facing. A helical transmembrane segment spans residues 36-56 (GVIGGIAAALAAGIYVIWGPI). Over 57–517 (TERKKRRKGL…QQGREYRSEE (461 aa)) the chain is Cytoplasmic. One can recognise a USP domain in the interval 68 to 502 (PGLVNLGNTC…SAYLLFYERV (435 aa)). Residue C77 is the Nucleophile of the active site. The interval 198-221 (MAPRQVTCHTRGSPHPTTNHWKSQ) is disordered. The segment covering 204 to 218 (TCHTRGSPHPTTNHW) has biased composition (polar residues). Glycyl lysine isopeptide (Lys-Gly) (interchain with G-Cter in ubiquitin) cross-links involve residues K235 and K289. A disordered region spans residues 364–395 (SQHGPKATENPGSAPEVQDAQAAPKPGLSQPG). The Proton acceptor role is filled by H452.

It belongs to the peptidase C19 family. Post-translationally, ubiquitinated by parkin (PRKN) at Lys-235 and Lys-289, leading to its degradation.

Its subcellular location is the mitochondrion outer membrane. The enzyme catalyses Thiol-dependent hydrolysis of ester, thioester, amide, peptide and isopeptide bonds formed by the C-terminal Gly of ubiquitin (a 76-residue protein attached to proteins as an intracellular targeting signal).. Inhibited by the diterpenoid derivative 15-oxospiramilactone (S3). Deubiquitinating enzyme tethered to the mitochondrial outer membrane that acts as a key inhibitor of mitophagy by counteracting the action of parkin (PRKN): hydrolyzes ubiquitin attached by parkin on target proteins, such as RHOT1/MIRO1 and TOMM20, thereby blocking parkin's ability to drive mitophagy. Preferentially cleaves 'Lys-6'- and 'Lys-11'-linked polyubiquitin chains, 2 types of linkage that participate in mitophagic signaling. Does not cleave efficiently polyubiquitin phosphorylated at 'Ser-65'. Acts as negative regulator of mitochondrial fusion by mediating deubiquitination of MFN1 and MFN2. The polypeptide is Ubiquitin carboxyl-terminal hydrolase 30 (Usp30) (Mus musculus (Mouse)).